The following is a 365-amino-acid chain: Flagellar P-ring protein (365 aa).

The signal sequence occupies residues 1–20 (MKLPHFFVLAALVLSGAAHA).

Belongs to the FlgI family. As to quaternary structure, the basal body constitutes a major portion of the flagellar organelle and consists of four rings (L,P,S, and M) mounted on a central rod.

It is found in the periplasm. It localises to the bacterial flagellum basal body. Assembles around the rod to form the L-ring and probably protects the motor/basal body from shearing forces during rotation. The sequence is that of Flagellar P-ring protein from Thiobacillus denitrificans (strain ATCC 25259 / T1).